The sequence spans 441 residues: MAIGNPEVATMGKENTEAESSNGNESQLSSDLTKSLDLAEVKEDEKDNNQEEEDGLKAEASTKKKKKKSKSKKKKSSLQQTDPPSIPVLELFPSGDFPQGEIQQYNDDNLWRTTSEEKREMERLQKPIYNSLRQAAEVHRQVRKYMRSILKPGMLMIDLCETLENTVRKLISENGLQAGIAFPTGCSLNNVAAHWTPNSGDKTVLQYDDVMKLDFGTHIDGHIVDSAFTVAFNPMFDPLLAASRDATYTGIKEAGVDVRLCDVGAAVQEVMESYEVEINGKVYQVKSIRNLNGHSIGRYQIHAEKSVPNVRGGEQTKMEEGELYAIETFGSTGKGYVREDLECSHYMKNYDVGHVPLRLPRAKQLLATINKNFSTLAFCRRYLDRLGETKYLMALKNLCDSGIIEPCPPVCDVKGSYISQFEHTILLRPTCKEIISKGDDY.

Residues 1-103 (MAIGNPEVAT…SGDFPQGEIQ (103 aa)) are disordered. Positions 18–33 (AESSNGNESQLSSDLT) are enriched in polar residues. Over residues 37-62 (DLAEVKEDEKDNNQEEEDGLKAEAST) the composition is skewed to basic and acidic residues. Positions 63-76 (KKKKKKSKSKKKKS) are enriched in basic residues. H194 contacts substrate. A divalent metal cation is bound by residues D214, D225, and H294. H302 serves as a coordination point for substrate. 2 residues coordinate a divalent metal cation: E327 and E422.

Belongs to the peptidase M24A family. Methionine aminopeptidase eukaryotic type 2 subfamily. Co(2+) is required as a cofactor. It depends on Zn(2+) as a cofactor. Mn(2+) serves as cofactor. The cofactor is Fe(2+). As to expression, ubiquitous. Preferentially expressed in roots.

The protein resides in the cytoplasm. The enzyme catalyses Release of N-terminal amino acids, preferentially methionine, from peptides and arylamides.. Its function is as follows. Cotranslationally removes the N-terminal methionine from nascent proteins. The N-terminal methionine is often cleaved when the second residue in the primary sequence is small and uncharged (Met-Ala-, Cys, Gly, Pro, Ser, Thr, or Val). This is Methionine aminopeptidase 2A from Arabidopsis thaliana (Mouse-ear cress).